Here is a 236-residue protein sequence, read N- to C-terminus: MDWKTSEMLFPFPVYMAPLTSKFAAYKKKIANWLTVYRIFIALPTIIFIALDNQLGVLANFSVGAISISLQISLLIGGFLFLTAVISDYLDGYLARKWLAVSNFGKLWDPIADKVIINGVLIALAINGYFHFSLLIVFIVRDLVLDGMRIYAYEKKVVIAANWLGKWKTIMQMVGIVFSCFVWSFKQSEIASLNSGLFFWLLTQLPYYLAAVFSIWSFIVYNIQIYQQLKAYNSKL.

The next 5 helical transmembrane spans lie at 39-59 (IFIA…GVLA), 66-86 (ISIS…TAVI), 120-140 (VLIA…VFIV), 163-183 (WLGK…CFVW), and 196-216 (GLFF…FSIW).

It belongs to the CDP-alcohol phosphatidyltransferase class-I family.

It is found in the cell membrane. The catalysed reaction is a CDP-1,2-diacyl-sn-glycerol + sn-glycerol 3-phosphate = a 1,2-diacyl-sn-glycero-3-phospho-(1'-sn-glycero-3'-phosphate) + CMP + H(+). It participates in phospholipid metabolism; phosphatidylglycerol biosynthesis; phosphatidylglycerol from CDP-diacylglycerol: step 1/2. Functionally, this protein catalyzes the committed step to the synthesis of the acidic phospholipids. In Mycoplasma genitalium (strain ATCC 33530 / DSM 19775 / NCTC 10195 / G37) (Mycoplasmoides genitalium), this protein is CDP-diacylglycerol--glycerol-3-phosphate 3-phosphatidyltransferase (pgsA).